Reading from the N-terminus, the 186-residue chain is Ribosome-recycling factor (186 aa).

This sequence belongs to the RRF family.

The protein localises to the cytoplasm. Its function is as follows. Responsible for the release of ribosomes from messenger RNA at the termination of protein biosynthesis. May increase the efficiency of translation by recycling ribosomes from one round of translation to another. The chain is Ribosome-recycling factor from Chlorobium phaeobacteroides (strain BS1).